We begin with the raw amino-acid sequence, 581 residues long: Frizzled-3 (581 aa).

Positions 1–19 (MYAASILILHLTWAVATIA) are cleaved as a signal peptide. The Extracellular segment spans residues 20-237 (ANGAGHNGPV…TSSQKKTSET (218 aa)). Positions 35 to 156 (PNGLQCQPIA…PEKHELCMQI (122 aa)) constitute an FZ domain. 5 cysteine pairs are disulfide-bonded: Cys-40/Cys-101, Cys-48/Cys-94, Cys-85/Cys-123, Cys-112/Cys-153, and Cys-116/Cys-141. A glycan (N-linked (GlcNAc...) asparagine) is linked at Asn-54. Asn-206 carries an N-linked (GlcNAc...) asparagine glycan. A helical membrane pass occupies residues 238–258 (LILGLSAVCFVLTLFALVTFW). Over 259–270 (AEPTRFGYPERP) the chain is Cytoplasmic. The helical transmembrane segment at 271-291 (VLFLCLCYNLFSVCYLERIVF) threads the bilayer. Residues 292 to 321 (HNQARMHDVELQGRLMRPGCLLTPPCLASY) lie on the Extracellular side of the membrane. Residues 322–342 (ITTSYLSLCAASWWLIFALCF) traverse the membrane as a helical segment. Residues 343 to 359 (YLSSHKKWSSEALEKRS) lie on the Cytoplasmic side of the membrane. Residues 360 to 380 (GLFHVLAWVPPLAPPIAALLL) traverse the membrane as a helical segment. Residues 381–393 (EKVRPSELTGMCY) are Extracellular-facing. Residues 394 to 414 (APGFVELPALVLLLLGLYFTL) traverse the membrane as a helical segment. At 415–442 (RASRSLLSLQQQLQPTLAHHRFGQIRKR) the chain is on the cytoplasmic side. The chain crosses the membrane as a helical span at residues 443 to 463 (FVLFSLLYFAPTTAGVVAALC). The Extracellular portion of the chain corresponds to 464–488 (ERYADSVPSCSTPDDCLSPTPLSAW). A helical membrane pass occupies residues 489-509 (PALVRIFFQLVGGTLTGLWVW). Residues 510–581 (SRKTCESYRN…PVYNPNQSRV (72 aa)) lie on the Cytoplasmic side of the membrane. Positions 579-581 (SRV) match the PDZ-binding motif.

The protein belongs to the G-protein coupled receptor Fz/Smo family. In terms of tissue distribution, wing, leg and eye imaginal disks. In embryos, expressed is seen in brain, proventriculus, Malpighian tubules, anal plate and visceral mesoderm of parasegment 8.

The protein resides in the membrane. Receptor for Wnt proteins. Most of frizzled receptors are coupled to the beta-catenin canonical signaling pathway, which leads to the activation of disheveled proteins, inhibition of GSK-3 kinase, nuclear accumulation of beta-catenin and activation of Wnt target genes. A second signaling pathway involving PKC and calcium fluxes has been seen for some family members, but it is not yet clear if it represents a distinct pathway or if it can be integrated in the canonical pathway, as PKC seems to be required for Wnt-mediated inactivation of GSK-3 kinase. Both pathways seem to involve interactions with G-proteins. Required to coordinate the cytoskeletons of epidermal cells to produce a parallel array of cuticular hairs and bristles. The polypeptide is Frizzled-3 (fz3) (Drosophila melanogaster (Fruit fly)).